Reading from the N-terminus, the 159-residue chain is Protein HydD (159 aa).

This sequence belongs to the peptidase A31 family.

This is Protein HydD (hydD) from Wolinella succinogenes (strain ATCC 29543 / DSM 1740 / CCUG 13145 / JCM 31913 / LMG 7466 / NCTC 11488 / FDC 602W) (Vibrio succinogenes).